The following is a 717-amino-acid chain: MSGDGATEQAAEYVPEKVKKAEKKLEENPYDLDAWSILIREAQNQPIDKARKTYERLVAQFPSSGRFWKLYIEAEIKAKNYDKVEKLFQRCLMKVLHIDLWKCYLSYVRETKGKLPSYKEKMAQAYDFALDKIGMEIMSYQIWVDYINFLKGVEAVGSYAENQRITAVRRVYQRGCVNPMINIEQLWRDYNKYEEGINIHLAKKMIEDRSRDYMNARRVAKEYETVMKGLDRNAPSVPPQNTPQEAQQVDMWKKYIQWEKSNPLRTEDQTLITKRVMFAYEQCLLVLGHHPDIWYEAAQYLEQSSKLLAEKGDMNNAKLFSDEAANIYERAISTLLKKNMLLYFAYADYEESRMKYEKVHSIYNRLLAIEDIDPTLVYIQYMKFARRAEGIKSGRMIFKKAREDTRTRHHVYVTAALMEYYCSKDKSVAFKIFELGLKKYGDIPEYVLAYIDYLSHLNEDNNTRVLFERVLTSGSLPPEKSGEIWARFLAFESNIGDLASILKVEKRRFTAFKEEYEGKETALLVDRYKFMDLYPCSASELKALGYKDVSRAKLAAIIPDPVVAPSIVPVLKDEVDRKPEYPKPDTQQMIPFQPRHLAPPGLHPVPGGVFPVPPAAVVLMKLLPPPICFQGPFVQVDELMEIFRRCKIPNTVEEAVRIITGGAPELAVEGNGPVESNAVLTKAVKRPNEDSDEDEEKGAVVPPVHDIYRARQQKRIR.

Position 2 is an N-acetylserine (Ser2). HAT repeat units follow at residues 45 to 77 (QPID…AEIK), 79 to 110 (KNYD…YVRE), 117 to 152 (SYKE…FLKG), 163 to 196 (QRIT…YEEG), 221 to 261 (KEYE…WEKS), 271 to 303 (LITK…YLEQ), 319 to 352 (LFSD…YEES), 354 to 387 (MKYE…FARR), and 458 to 494 (NEDN…FESN). A disordered region spans residues 684 to 705 (VKRPNEDSDEDEEKGAVVPPVH). Ser691 bears the Phosphoserine mark.

In terms of assembly, homodimer. The CSTF complex is composed of CSTF1 (50 kDa subunit), CSTF2 (64 kDa subunit) and CSTF3 (77 kDa subunit). CSTF3 directly interacts with CSTF1 and CSTF2. Interacts with FIP1L1.

The protein resides in the nucleus. Functionally, one of the multiple factors required for polyadenylation and 3'-end cleavage of mammalian pre-mRNAs. This Homo sapiens (Human) protein is Cleavage stimulation factor subunit 3 (CSTF3).